The following is an 81-amino-acid chain: ATP synthase subunit c, chloroplastic (81 aa).

2 helical membrane-spanning segments follow: residues Pro-3 to Gly-23 and Leu-57 to Ala-77.

The protein belongs to the ATPase C chain family. In terms of assembly, F-type ATPases have 2 components, F(1) - the catalytic core - and F(0) - the membrane proton channel. F(1) has five subunits: alpha(3), beta(3), gamma(1), delta(1), epsilon(1). F(0) has four main subunits: a(1), b(1), b'(1) and c(10-14). The alpha and beta chains form an alternating ring which encloses part of the gamma chain. F(1) is attached to F(0) by a central stalk formed by the gamma and epsilon chains, while a peripheral stalk is formed by the delta, b and b' chains.

It is found in the plastid. The protein localises to the chloroplast thylakoid membrane. F(1)F(0) ATP synthase produces ATP from ADP in the presence of a proton or sodium gradient. F-type ATPases consist of two structural domains, F(1) containing the extramembraneous catalytic core and F(0) containing the membrane proton channel, linked together by a central stalk and a peripheral stalk. During catalysis, ATP synthesis in the catalytic domain of F(1) is coupled via a rotary mechanism of the central stalk subunits to proton translocation. Its function is as follows. Key component of the F(0) channel; it plays a direct role in translocation across the membrane. A homomeric c-ring of between 10-14 subunits forms the central stalk rotor element with the F(1) delta and epsilon subunits. The chain is ATP synthase subunit c, chloroplastic from Agrostis stolonifera (Creeping bentgrass).